A 122-amino-acid polypeptide reads, in one-letter code: Small ribosomal subunit protein uS13 (122 aa).

The segment at 98 to 122 (VRGQRTHTNARTRKGPAKAIAGKKK) is disordered.

The protein belongs to the universal ribosomal protein uS13 family. As to quaternary structure, part of the 30S ribosomal subunit. Forms a loose heterodimer with protein S19. Forms two bridges to the 50S subunit in the 70S ribosome.

Located at the top of the head of the 30S subunit, it contacts several helices of the 16S rRNA. In the 70S ribosome it contacts the 23S rRNA (bridge B1a) and protein L5 of the 50S subunit (bridge B1b), connecting the 2 subunits; these bridges are implicated in subunit movement. Contacts the tRNAs in the A and P-sites. The protein is Small ribosomal subunit protein uS13 of Roseobacter denitrificans (strain ATCC 33942 / OCh 114) (Erythrobacter sp. (strain OCh 114)).